A 132-amino-acid chain; its full sequence is MPTYSSMLHAKMIKSPAALNTPQPSPKQAVSNAHRLDGGSSYVVSLSEISSCPTSTTNSLFAAATPSTLLLSALYCTPPSQLRMKSSCTLTLFIPPLNTAASPTLPDTSCHGEWNTTTRPCLAASTALMYSL.

This is an uncharacterized protein from Botryotinia fuckeliana (Noble rot fungus).